We begin with the raw amino-acid sequence, 1047 residues long: tRNA wybutosine-synthesizing protein 4 (1047 aa).

S-adenosyl-L-methionine is bound by residues R69, G95, D122, 169-170 (DL), and E196. The 190-residue stretch at 814-1003 (GRQYLRSISA…AAGRDVYGNR (190 aa)) folds into the JmjC domain.

It belongs to the methyltransferase superfamily. LCMT family.

The catalysed reaction is 7-[(3S)-3-amino-3-carboxypropyl]wyosine(37) in tRNA(Phe) + S-adenosyl-L-methionine = 7-[(3S)-(3-amino-3-methoxycarbonyl)propyl]wyosine(37) in tRNA(Phe) + S-adenosyl-L-homocysteine. It catalyses the reaction 7-[(3S)-(3-amino-3-methoxycarbonyl)propyl]wyosine(37) in tRNA(Phe) + S-adenosyl-L-methionine + CO2 = wybutosine(37) in tRNA(Phe) + S-adenosyl-L-homocysteine + 2 H(+). The protein operates within tRNA modification; wybutosine-tRNA(Phe) biosynthesis. In terms of biological role, probable S-adenosyl-L-methionine-dependent methyltransferase that acts as a component of the wybutosine biosynthesis pathway. Wybutosine is a hyper modified guanosine with a tricyclic base found at the 3'-position adjacent to the anticodon of eukaryotic phenylalanine tRNA. May methylate the carboxyl group of leucine residues to form alpha-leucine ester residues. This Aspergillus fumigatus (strain ATCC MYA-4609 / CBS 101355 / FGSC A1100 / Af293) (Neosartorya fumigata) protein is tRNA wybutosine-synthesizing protein 4 (ppm2).